The primary structure comprises 252 residues: Chitooligosaccharide deacetylase (252 aa).

Mg(2+)-binding residues include His-61 and His-125.

The protein belongs to the YdjC deacetylase family. ChbG subfamily. In terms of assembly, homodimer. Mg(2+) serves as cofactor.

The protein localises to the cytoplasm. The catalysed reaction is N,N'-diacetylchitobiose + H2O = N-acetyl-beta-D-glucosaminyl-(1-&gt;4)-D-glucosamine + acetate. It catalyses the reaction diacetylchitobiose-6'-phosphate + H2O = N'-monoacetylchitobiose-6'-phosphate + acetate. Its pathway is glycan degradation; chitin degradation. Its function is as follows. Involved in the degradation of chitin. ChbG is essential for growth on the acetylated chitooligosaccharides chitobiose and chitotriose but is dispensable for growth on cellobiose and chitosan dimer, the deacetylated form of chitobiose. Deacetylation of chitobiose-6-P and chitotriose-6-P is necessary for both the activation of the chb promoter by the regulatory protein ChbR and the hydrolysis of phosphorylated beta-glucosides by the phospho-beta-glucosidase ChbF. Catalyzes the removal of only one acetyl group from chitobiose-6-P to yield monoacetylchitobiose-6-P, the inducer of ChbR and the substrate of ChbF. The sequence is that of Chitooligosaccharide deacetylase from Escherichia coli O45:K1 (strain S88 / ExPEC).